The chain runs to 98 residues: DNA-binding protein Fis (98 aa).

A DNA-binding region (H-T-H motif) is located at residues 74–93 (QTRAALMMGINRGTLRKKLK).

This sequence belongs to the transcriptional regulatory Fis family. Homodimer.

Activates ribosomal RNA transcription. Plays a direct role in upstream activation of rRNA promoters. The sequence is that of DNA-binding protein Fis from Pectobacterium atrosepticum (strain SCRI 1043 / ATCC BAA-672) (Erwinia carotovora subsp. atroseptica).